The sequence spans 433 residues: Serine/threonine-protein kinase toxin HipA (433 aa).

A Phosphoserine; by autocatalysis modification is found at serine 147. ATP contacts are provided by residues 151–154 (VQPK), lysine 178, and 220–222 (ERF). Aspartate 306 functions as the Proton acceptor in the catalytic mechanism. Residues 308-311 (HGKN) and 327-328 (YD) contribute to the ATP site. DNA-binding regions lie at residues 380–384 (RIARR) and arginine 429.

Belongs to the HipA Ser/Thr kinase family. As to quaternary structure, monomer. Forms a HipA(2)HipB(2)-DNA complex with cognate antitoxin HipB; has higher affinity for the latter when HipB is prebound to DNA and HipA is phosphorylated. Binds DNA in the ternary complex.

It catalyses the reaction L-seryl-[protein] + ATP = O-phospho-L-seryl-[protein] + ADP + H(+). The enzyme catalyses L-threonyl-[protein] + ATP = O-phospho-L-threonyl-[protein] + ADP + H(+). In terms of biological role, toxic component of a type II toxin-antitoxin (TA) system; overexpression in wild-type temporarily inhibits cell growth, overexpression in a hipAB deletion leads to acute growth inhibition. The toxic effect of HipA is neutralized by its cognate antitoxin HipB. In the ternary phosphoserine-HipA-HipB-DNA complex the DNA is bent about 125 degrees; all HipA in the crystallized ternary complex is phosphorylated. In E.coli phosphorylation of HipA is thought to release HipB from the HipA-HipB-DNA complex, suggesting the complex functions differently in the 2 bacteria. Phosphorylates Glu-tRNA-ligase (GltX, on 'Ser-239') in vivo, with HipB probably acts as a corepressor for transcription of the hipBA promoter. This chain is Serine/threonine-protein kinase toxin HipA, found in Shewanella oneidensis (strain ATCC 700550 / JCM 31522 / CIP 106686 / LMG 19005 / NCIMB 14063 / MR-1).